Consider the following 126-residue polypeptide: UPF0102 protein MXAN_3551 (126 aa).

Belongs to the UPF0102 family.

This chain is UPF0102 protein MXAN_3551, found in Myxococcus xanthus (strain DK1622).